A 238-amino-acid polypeptide reads, in one-letter code: Ribonuclease PH (238 aa).

Phosphate is bound by residues R86 and 124-126; that span reads GTR.

Belongs to the RNase PH family. Homohexameric ring arranged as a trimer of dimers.

It catalyses the reaction tRNA(n+1) + phosphate = tRNA(n) + a ribonucleoside 5'-diphosphate. Its function is as follows. Phosphorolytic 3'-5' exoribonuclease that plays an important role in tRNA 3'-end maturation. Removes nucleotide residues following the 3'-CCA terminus of tRNAs; can also add nucleotides to the ends of RNA molecules by using nucleoside diphosphates as substrates, but this may not be physiologically important. Probably plays a role in initiation of 16S rRNA degradation (leading to ribosome degradation) during starvation. This chain is Ribonuclease PH, found in Haemophilus ducreyi (strain 35000HP / ATCC 700724).